Here is a 1403-residue protein sequence, read N- to C-terminus: DNA-directed RNA polymerase subunit beta' (1403 aa).

4 residues coordinate Zn(2+): Cys-70, Cys-72, Cys-85, and Cys-88. Asp-461, Asp-463, and Asp-465 together coordinate Mg(2+). Zn(2+) contacts are provided by Cys-816, Cys-890, Cys-897, and Cys-900.

Belongs to the RNA polymerase beta' chain family. In terms of assembly, the RNAP catalytic core consists of 2 alpha, 1 beta, 1 beta' and 1 omega subunit. When a sigma factor is associated with the core the holoenzyme is formed, which can initiate transcription. The cofactor is Mg(2+). It depends on Zn(2+) as a cofactor.

It catalyses the reaction RNA(n) + a ribonucleoside 5'-triphosphate = RNA(n+1) + diphosphate. DNA-dependent RNA polymerase catalyzes the transcription of DNA into RNA using the four ribonucleoside triphosphates as substrates. This chain is DNA-directed RNA polymerase subunit beta', found in Dechloromonas aromatica (strain RCB).